We begin with the raw amino-acid sequence, 344 residues long: HTH-type transcriptional regulator MalR (344 aa).

Residues 1–54 enclose the HTH lacI-type domain; the sequence is MTTRLADIAAQAGVSEATVSRVLNGKPGVAATTRQSVLAALDVLGYERPVRLRQ. Residues 5-24 constitute a DNA-binding region (H-T-H motif); the sequence is LADIAAQAGVSEATVSRVLN.

Transcriptional repressor of the maltosaccharide utilization operon malEFG. In Streptomyces coelicolor (strain ATCC BAA-471 / A3(2) / M145), this protein is HTH-type transcriptional regulator MalR (malR).